The primary structure comprises 1325 residues: NHS-like protein 3 (1325 aa).

Residues 53–85 are a coiled coil; the sequence is LEDLHTEAQEGLKILQQEEEDTSSKERNESLEN. 10 disordered regions span residues 68–92, 111–131, 291–348, 368–570, 595–614, 829–891, 935–981, 1084–1138, 1243–1272, and 1293–1313; these read QQEE…SGHS, QGST…KRRS, CSAS…KGKC, MSVS…AKTS, QTNT…TTVK, EVNG…MEES, LLST…VSEF, VGED…SSAV, GTKK…ENAT, and SDQV…EQAS. The span at 296 to 334 shows a compositional bias: low complexity; sequence ASKGSMASASPSSSRSGSGTNQAPPTTSPSRSNSQSSET. Residues 335 to 344 are compositionally biased toward polar residues; that stretch reads IVSNSSTISS. Residues 369–378 show a composition bias toward low complexity; the sequence is SVSSSSSWKS. Residues 400–412 are compositionally biased toward polar residues; that stretch reads VRNSHSFSRSLSV. Residues 428-447 are compositionally biased toward basic and acidic residues; sequence LHHENMQRQREQGDIQDPKD. A compositionally biased stretch (polar residues) spans 450–460; it reads PNNNEQTNRDI. The segment covering 515-524 has biased composition (basic and acidic residues); the sequence is KTRECGENFD. The segment covering 528–541 has biased composition (low complexity); sequence SPSSGYSSQSGTPT. A compositionally biased stretch (pro residues) spans 834–850; that stretch reads SPPPSPPPEHHPPPPPI. Polar residues-rich tracts occupy residues 935–948 and 1088–1100; these read LLST…SSPE and QVNN…TEPT. The segment covering 1124–1138 has biased composition (low complexity); it reads KSNSPAKSSSASSAV. Positions 1302-1311 are enriched in polar residues; sequence RAQSLGNQEQ.

Its function is as follows. Able to directly activate the TNF-NFkappaB signaling pathway. In Danio rerio (Zebrafish), this protein is NHS-like protein 3 (nhsl3).